The sequence spans 347 residues: Dual specificity mitogen-activated protein kinase kinase 3 (347 aa).

Met-1 carries the post-translational modification N-acetylmethionine. Residues 1 to 15 (MESPASSQPASMPQS) show a composition bias toward low complexity. The tract at residues 1 to 46 (MESPASSQPASMPQSKGKSKRKKDLRISCMSKPPAPNPTPPRNLDS) is disordered. A phosphoserine mark is found at Ser-3 and Ser-15. Positions 64–325 (LVTISELGRG…YLELMEHPFF (262 aa)) constitute a Protein kinase domain. ATP-binding positions include 70 to 78 (LGRGAYGVV) and Lys-93. Asp-190 functions as the Proton acceptor in the catalytic mechanism. Ser-218 carries the post-translational modification Phosphoserine. Thr-222 is modified (phosphothreonine).

This sequence belongs to the protein kinase superfamily. STE Ser/Thr protein kinase family. MAP kinase kinase subfamily. As to quaternary structure, component of a signaling complex containing at least AKAP13, PKN1, MAPK14, ZAK and MAP2K3. Within this complex, AKAP13 interacts directly with PKN1, which in turn recruits MAPK14, MAP2K3 and ZAK. Binds to DYRK1B/MIRK and increases its kinase activity. Part of a complex with MAP3K3, RAC1 and CCM2. Interacts with ARRB1. In terms of assembly, (Microbial infection) Interacts with Yersinia YopJ. Autophosphorylated. Phosphorylation on Ser-218 and Thr-222 by MAP kinase kinase kinases positively regulates the kinase activity. Phosphorylated by TAOK2. Post-translationally, (Microbial infection) Yersinia YopJ may acetylate Ser/Thr residues, preventing phosphorylation and activation, thus blocking the MAPK signaling pathway. Abundant expression is seen in the skeletal muscle. It is also widely expressed in other tissues.

It carries out the reaction L-seryl-[protein] + ATP = O-phospho-L-seryl-[protein] + ADP + H(+). It catalyses the reaction L-threonyl-[protein] + ATP = O-phospho-L-threonyl-[protein] + ADP + H(+). The enzyme catalyses L-tyrosyl-[protein] + ATP = O-phospho-L-tyrosyl-[protein] + ADP + H(+). With respect to regulation, activated by dual phosphorylation on Ser-218 and Thr-222. Functionally, dual specificity kinase. Is activated by cytokines and environmental stress in vivo. Catalyzes the concomitant phosphorylation of a threonine and a tyrosine residue in the MAP kinase p38. Part of a signaling cascade that begins with the activation of the adrenergic receptor ADRA1B and leads to the activation of MAPK14. The protein is Dual specificity mitogen-activated protein kinase kinase 3 (MAP2K3) of Homo sapiens (Human).